Here is a 170-residue protein sequence, read N- to C-terminus: Large ribosomal subunit protein bL9 (170 aa).

Positions 149–170 are disordered; it reads DGDNEDLDEDNAADENEDYSEE.

It belongs to the bacterial ribosomal protein bL9 family.

Binds to the 23S rRNA. In Psychrobacter cryohalolentis (strain ATCC BAA-1226 / DSM 17306 / VKM B-2378 / K5), this protein is Large ribosomal subunit protein bL9.